We begin with the raw amino-acid sequence, 161 residues long: MGEIVFTEKQEALVKESWEILKQDIPKYSLHFFSQILEIAPAAKDMFSFLRDTDEVPHNNPKLKAHAVKVFKMTCETAIQLREKGKVVVADTTLQYLGSVHFKSGVLDPHFEVVKEALVRTLKEGLGEKYNEEVEGAWSKAYDHLALAIKAEMKQEDSQKP.

A Globin domain is found at V5–K154. The Homodimerization motif lies at E38–A42. Residues S48, K62, H66, and H101 each contribute to the heme b site. Residues D108 to R120 carry the Homodimerization motif.

This sequence belongs to the plant globin family. Homodimer. It depends on heme b as a cofactor.

The protein localises to the cytoplasm. The protein resides in the nucleus. It catalyses the reaction Fe(III)-heme b-[protein] + nitric oxide + H2O = Fe(II)-heme b-[protein] + nitrite + 2 H(+). Functionally, phytoglobin that reduces nitrite to nitric oxide (NO) under anoxic conditions (e.g. during flooding or in waterlogged soil). May not function as an oxygen storage or transport protein. Has an unusually high affinity for O(2) through an hexacoordinate heme iron because of a very low dissociation constant. The polypeptide is Anaerobic nitrite reductase HB2 (Brassica napus (Rape)).